The sequence spans 231 residues: Large ribosomal subunit protein uL1 (231 aa).

It belongs to the universal ribosomal protein uL1 family. In terms of assembly, part of the 50S ribosomal subunit.

Binds directly to 23S rRNA. The L1 stalk is quite mobile in the ribosome, and is involved in E site tRNA release. In terms of biological role, protein L1 is also a translational repressor protein, it controls the translation of the L11 operon by binding to its mRNA. This chain is Large ribosomal subunit protein uL1, found in Pseudomonas fluorescens (strain ATCC BAA-477 / NRRL B-23932 / Pf-5).